The following is a 439-amino-acid chain: tRNA-2-methylthio-N(6)-dimethylallyladenosine synthase (439 aa).

The region spanning 2–119 (KKLYLKTHGC…LPDLLDSVIQ (118 aa)) is the MTTase N-terminal domain. [4Fe-4S] cluster contacts are provided by cysteine 11, cysteine 48, cysteine 82, cysteine 156, cysteine 160, and cysteine 163. One can recognise a Radical SAM core domain in the interval 142–374 (RAEGPSAFVS…QNRINAKAAE (233 aa)). A TRAM domain is found at 377-439 (QSMVGTQQRI…RPYSLWGEIC (63 aa)).

This sequence belongs to the methylthiotransferase family. MiaB subfamily. As to quaternary structure, monomer. It depends on [4Fe-4S] cluster as a cofactor.

Its subcellular location is the cytoplasm. It catalyses the reaction N(6)-dimethylallyladenosine(37) in tRNA + (sulfur carrier)-SH + AH2 + 2 S-adenosyl-L-methionine = 2-methylsulfanyl-N(6)-dimethylallyladenosine(37) in tRNA + (sulfur carrier)-H + 5'-deoxyadenosine + L-methionine + A + S-adenosyl-L-homocysteine + 2 H(+). Catalyzes the methylthiolation of N6-(dimethylallyl)adenosine (i(6)A), leading to the formation of 2-methylthio-N6-(dimethylallyl)adenosine (ms(2)i(6)A) at position 37 in tRNAs that read codons beginning with uridine. This is tRNA-2-methylthio-N(6)-dimethylallyladenosine synthase from Coxiella burnetii (strain CbuK_Q154) (Coxiella burnetii (strain Q154)).